Consider the following 565-residue polypeptide: Sulfite reductase [NADPH] hemoprotein beta-component (565 aa).

The [4Fe-4S] cluster site is built by cysteine 429, cysteine 435, cysteine 474, and cysteine 478. Siroheme is bound at residue cysteine 478.

This sequence belongs to the nitrite and sulfite reductase 4Fe-4S domain family. As to quaternary structure, alpha(8)-beta(8). The alpha component is a flavoprotein, the beta component is a hemoprotein. The cofactor is siroheme. [4Fe-4S] cluster is required as a cofactor.

It catalyses the reaction hydrogen sulfide + 3 NADP(+) + 3 H2O = sulfite + 3 NADPH + 4 H(+). Its pathway is sulfur metabolism; hydrogen sulfide biosynthesis; hydrogen sulfide from sulfite (NADPH route): step 1/1. Functionally, component of the sulfite reductase complex that catalyzes the 6-electron reduction of sulfite to sulfide. This is one of several activities required for the biosynthesis of L-cysteine from sulfate. The protein is Sulfite reductase [NADPH] hemoprotein beta-component of Pseudoalteromonas translucida (strain TAC 125).